We begin with the raw amino-acid sequence, 137 residues long: Small ribosomal subunit protein uS9c (137 aa).

Belongs to the universal ribosomal protein uS9 family.

It localises to the plastid. It is found in the chloroplast. This Gracilaria tenuistipitata var. liui (Red alga) protein is Small ribosomal subunit protein uS9c (rps9).